The primary structure comprises 503 residues: 2,3-bisphosphoglycerate-independent phosphoglycerate mutase (503 aa).

Residues aspartate 10 and serine 60 each contribute to the Mn(2+) site. The Phosphoserine intermediate role is filled by serine 60. Substrate-binding positions include histidine 121, 150–151 (RD), arginine 181, arginine 187, 256–259 (RPDR), and lysine 330. The Mn(2+) site is built by aspartate 396, histidine 400, aspartate 437, histidine 438, and histidine 455.

The protein belongs to the BPG-independent phosphoglycerate mutase family. Monomer. Mn(2+) serves as cofactor.

The enzyme catalyses (2R)-2-phosphoglycerate = (2R)-3-phosphoglycerate. It functions in the pathway carbohydrate degradation; glycolysis; pyruvate from D-glyceraldehyde 3-phosphate: step 3/5. Its function is as follows. Catalyzes the interconversion of 2-phosphoglycerate and 3-phosphoglycerate. The chain is 2,3-bisphosphoglycerate-independent phosphoglycerate mutase from Mycoplasmoides gallisepticum (strain R(low / passage 15 / clone 2)) (Mycoplasma gallisepticum).